The sequence spans 148 residues: Ubiquitin-conjugating enzyme E2 29 (148 aa).

Residues 1-147 (MATRRILKEL…ARSWTQKYAL (147 aa)) enclose the UBC core domain. The active-site Glycyl thioester intermediate is Cys-85.

This sequence belongs to the ubiquitin-conjugating enzyme family.

The catalysed reaction is S-ubiquitinyl-[E1 ubiquitin-activating enzyme]-L-cysteine + [E2 ubiquitin-conjugating enzyme]-L-cysteine = [E1 ubiquitin-activating enzyme]-L-cysteine + S-ubiquitinyl-[E2 ubiquitin-conjugating enzyme]-L-cysteine.. Its pathway is protein modification; protein ubiquitination. Functionally, accepts the ubiquitin from the E1 complex and catalyzes its covalent attachment to other proteins. The chain is Ubiquitin-conjugating enzyme E2 29 (UBC29) from Arabidopsis thaliana (Mouse-ear cress).